Consider the following 508-residue polypeptide: Maturase K (508 aa).

This sequence belongs to the intron maturase 2 family. MatK subfamily.

The protein resides in the plastid. Its subcellular location is the chloroplast. In terms of biological role, usually encoded in the trnK tRNA gene intron. Probably assists in splicing its own and other chloroplast group II introns. This Huidobria chilensis (Loasa chilensis) protein is Maturase K.